The following is a 165-amino-acid chain: Protein OPG091 (165 aa).

This sequence belongs to the orthopoxvirus OPG091 family.

The protein resides in the virion. It is found in the host cytoplasm. Functionally, contributes to vaccinia virus virulence in mice but not to replication in cell culture. The polypeptide is Protein OPG091 (OPG091) (Homo sapiens (Human)).